We begin with the raw amino-acid sequence, 246 residues long: MFPIKSGLEPKRKQELLEFQKQAGLKFKDLRLLDLAFHHRSFSNEHNNFHANNERLEFLGDSVLGLVAASYLYKSFEDRPEGELAKIKASAVSEDALSKTASKLNISNYLVLGRGEEMSGGREKKAILADALEAVIGAYYIDSGFKAAQKFVLRLLESTIHSVLEKKFISDYKSLLQELVQKKFKTVPKYELKKASGPDHDRTFWFSVSINGKVYGPLSGKTKKEAEQSVAKVAYENLCSESTVSK.

An RNase III domain is found at 16–144 (LLEFQKQAGL…VIGAYYIDSG (129 aa)). Glu-57 lines the Mg(2+) pocket. Asp-61 is an active-site residue. Positions 130 and 133 each coordinate Mg(2+). Residue Glu-133 is part of the active site. Residues 171–240 (DYKSLLQELV…AKVAYENLCS (70 aa)) enclose the DRBM domain.

The protein belongs to the ribonuclease III family. In terms of assembly, homodimer. The cofactor is Mg(2+).

It localises to the cytoplasm. The enzyme catalyses Endonucleolytic cleavage to 5'-phosphomonoester.. In terms of biological role, digests double-stranded RNA. Involved in the processing of primary rRNA transcript to yield the immediate precursors to the large and small rRNAs (23S and 16S). Processes some mRNAs, and tRNAs when they are encoded in the rRNA operon. Processes pre-crRNA and tracrRNA of type II CRISPR loci if present in the organism. This Treponema denticola (strain ATCC 35405 / DSM 14222 / CIP 103919 / JCM 8153 / KCTC 15104) protein is Ribonuclease 3.